Here is a 269-residue protein sequence, read N- to C-terminus: Phosphonates import ATP-binding protein PhnC (269 aa).

The ABC transporter domain occupies 2-245 (LVVEGLTCRF…VARELYDLEA (244 aa)). 34 to 41 (GRSGAGKS) provides a ligand contact to ATP.

Belongs to the ABC transporter superfamily. Phosphonates importer (TC 3.A.1.9.1) family. The complex is composed of two ATP-binding proteins (PhnC), two transmembrane proteins (PhnE) and a solute-binding protein (PhnD).

The protein localises to the cell inner membrane. The catalysed reaction is phosphonate(out) + ATP + H2O = phosphonate(in) + ADP + phosphate + H(+). Functionally, part of the ABC transporter complex PhnCDE involved in phosphonates import. Responsible for energy coupling to the transport system. The protein is Phosphonates import ATP-binding protein PhnC of Bradyrhizobium diazoefficiens (strain JCM 10833 / BCRC 13528 / IAM 13628 / NBRC 14792 / USDA 110).